Consider the following 178-residue polypeptide: Protein Vhl (178 aa).

It belongs to the VHL family. Part of a complex with Cul2, Roc1a/Rbx1 and the elongin BC complex. Interacts with sima/Hif1a. Interacts with itself. Interacts with mgr and betaTub56D/tubulin beta-1 chain. Interacts with tubulin alpha-beta heterodimers by itself or in complex with mgr. Interacts with microtubules (MTs).

It participates in protein modification; protein ubiquitination. Its function is as follows. Involved in development of tracheal vasculature. Probably involved in halting cell migration at the end of vascular tube outgrowth. Possesses E3 ubiquitin ligase activity when in complex with Elongin BC complex, Cul2 and Rox1a/Rbx1, and can target sima/Hif1a for ubiquitination. May play a critical role in promoting microtubule stabilization when tubulins are correctly folded by the prefoldin complex. If tubulin is incorrectly folded, may promote its degradation. This Drosophila melanogaster (Fruit fly) protein is Protein Vhl.